The primary structure comprises 213 residues: Orotate phosphoribosyltransferase (213 aa).

A 5-phospho-alpha-D-ribose 1-diphosphate-binding site is contributed by Lys-26. 34–35 is a binding site for orotate; that stretch reads FF. Residues 72-73, Arg-99, Lys-100, Lys-103, His-105, and 124-132 contribute to the 5-phospho-alpha-D-ribose 1-diphosphate site; these read YK and DDVITAGTA. 2 residues coordinate orotate: Thr-128 and Arg-156.

Belongs to the purine/pyrimidine phosphoribosyltransferase family. PyrE subfamily. In terms of assembly, homodimer. Mg(2+) is required as a cofactor.

The enzyme catalyses orotidine 5'-phosphate + diphosphate = orotate + 5-phospho-alpha-D-ribose 1-diphosphate. Its pathway is pyrimidine metabolism; UMP biosynthesis via de novo pathway; UMP from orotate: step 1/2. Its function is as follows. Catalyzes the transfer of a ribosyl phosphate group from 5-phosphoribose 1-diphosphate to orotate, leading to the formation of orotidine monophosphate (OMP). The sequence is that of Orotate phosphoribosyltransferase from Pseudomonas putida (strain W619).